The following is a 237-amino-acid chain: DCN1-like protein 5 (237 aa).

S41 is modified (phosphoserine; by IKKA). In terms of domain architecture, DCUN1 spans 46–232; sequence FSRKKCLAWF…LLDEFVEWQK (187 aa).

As to quaternary structure, part of a complex that contains DCUN1D5, CUL1 and RBX1; this interaction is bridged by CUL1. Interacts (via the DCUN1 domain) with the unneddylated cullins: interacts with CUL1, CUL2, CUL3, CUL4A, CUL4B and CUL5; these interactions promote the cullin neddylation and the identity of the cullin dictates the affinity of the interaction. Interacts (via DCUN1 domain) with UBE2M (N-terminally acetylated form) and probably with UBE2F (N-terminally acetylated form). May also interact with regulators or subunits of cullin-RING ligases such as RBX1, RNF7, ELOB and DDB1; these interactions are bridged by cullins. Interacts with CAND1; this interaction is bridged by cullins and strongly inhibits the neddylation of cullins. These CAND-cullin-DCNL complexes can only be neddylated in the presence of a substrate adapter. In terms of processing, phosphorylation at Ser-41 is independent of cullin's interaction. Phosphorylated in response to both TICAM1 and MYD88 dependent Toll-like receptor (TLR) pathway activation. Phosphorylated in response to IL1B stimulation. In terms of tissue distribution, highly expressed in testis. Lower levels of expression in skin, thymus, spleen, lymph nodes, lung, brain, heart, skeletal muscles, kidney, liver an ovary.

Its subcellular location is the nucleus. It localises to the cytoplasm. The protein localises to the cytoskeleton. The protein resides in the spindle. Functionally, contributes to the neddylation of all cullins by transferring NEDD8 from N-terminally acetylated NEDD8-conjugating E2s enzyme to different cullin C-terminal domain-RBX complexes which is necessary for the activation of cullin-RING E3 ubiquitin ligases (CRLs). May play a role in DNA damage response and may participate in cell proliferation and anchorage-independent cell growth. The protein is DCN1-like protein 5 of Mus musculus (Mouse).